Reading from the N-terminus, the 307-residue chain is Nitric oxide synthase-interacting protein homolog (307 aa).

Residues 120-159 (PAMTPAHSSAAASEKPSTSSAAAAASSESSSASSISNMTN) form a disordered region. Positions 127 to 155 (SSAAASEKPSTSSAAAAASSESSSASSIS) are enriched in low complexity.

Belongs to the NOSIP family.

It is found in the cytoplasm. It localises to the nucleus. In terms of biological role, negatively regulates nitric oxide production by inducing nitric oxide synthase translocation to actin cytoskeleton and inhibiting its enzymatic activity. The sequence is that of Nitric oxide synthase-interacting protein homolog from Drosophila melanogaster (Fruit fly).